Here is a 429-residue protein sequence, read N- to C-terminus: Adenylosuccinate synthetase (429 aa).

GTP contacts are provided by residues 13-19 and 41-43; these read GDEGKGK and GHT. Asp-14 acts as the Proton acceptor in catalysis. Mg(2+) contacts are provided by Asp-14 and Gly-41. IMP is bound by residues 14–17, 39–42, Thr-130, Arg-144, Gln-225, Thr-240, and Arg-304; these read DEGK and NAGH. The active-site Proton donor is His-42. Substrate is bound at residue 300–306; it reads ATTGRAR. GTP is bound by residues Arg-306, 332-334, and 413-415; these read KLD and STG.

It belongs to the adenylosuccinate synthetase family. In terms of assembly, homodimer. The cofactor is Mg(2+).

It is found in the cytoplasm. It carries out the reaction IMP + L-aspartate + GTP = N(6)-(1,2-dicarboxyethyl)-AMP + GDP + phosphate + 2 H(+). Its pathway is purine metabolism; AMP biosynthesis via de novo pathway; AMP from IMP: step 1/2. Functionally, plays an important role in the de novo pathway of purine nucleotide biosynthesis. Catalyzes the first committed step in the biosynthesis of AMP from IMP. The chain is Adenylosuccinate synthetase from Pseudomonas fluorescens (strain SBW25).